A 202-amino-acid polypeptide reads, in one-letter code: Tetratricopeptide repeat protein 36 (202 aa).

TPR repeat units lie at residues 49–82 (AQDL…LPER), 83–116 (ASAY…SGIA), and 121–154 (RQAL…GSDF).

Belongs to the TTC36 family.

The protein is Tetratricopeptide repeat protein 36 (ttc36) of Xenopus tropicalis (Western clawed frog).